Consider the following 109-residue polypeptide: UPF0060 membrane protein PA3275 (109 aa).

4 helical membrane-spanning segments follow: residues 5 to 25 (FWFV…YLWL), 27 to 47 (LGKS…FALL), 59 to 79 (AYAA…AFVE), and 84 to 104 (LWSD…VLFG).

This sequence belongs to the UPF0060 family.

It localises to the cell inner membrane. The sequence is that of UPF0060 membrane protein PA3275 from Pseudomonas aeruginosa (strain ATCC 15692 / DSM 22644 / CIP 104116 / JCM 14847 / LMG 12228 / 1C / PRS 101 / PAO1).